The primary structure comprises 253 residues: 4-hydroxy-tetrahydrodipicolinate reductase (253 aa).

16-21 (GDTGRM) provides a ligand contact to NAD(+). Arginine 44 lines the NADP(+) pocket. NAD(+) contacts are provided by residues 85 to 87 (GTT) and 111 to 114 (CANT). The active-site Proton donor/acceptor is histidine 144. Histidine 145 serves as a coordination point for (S)-2,3,4,5-tetrahydrodipicolinate. The active-site Proton donor is lysine 148. A (S)-2,3,4,5-tetrahydrodipicolinate-binding site is contributed by 154–155 (GT).

It belongs to the DapB family.

It localises to the cytoplasm. It carries out the reaction (S)-2,3,4,5-tetrahydrodipicolinate + NAD(+) + H2O = (2S,4S)-4-hydroxy-2,3,4,5-tetrahydrodipicolinate + NADH + H(+). The enzyme catalyses (S)-2,3,4,5-tetrahydrodipicolinate + NADP(+) + H2O = (2S,4S)-4-hydroxy-2,3,4,5-tetrahydrodipicolinate + NADPH + H(+). Its pathway is amino-acid biosynthesis; L-lysine biosynthesis via DAP pathway; (S)-tetrahydrodipicolinate from L-aspartate: step 4/4. Catalyzes the conversion of 4-hydroxy-tetrahydrodipicolinate (HTPA) to tetrahydrodipicolinate. This chain is 4-hydroxy-tetrahydrodipicolinate reductase, found in Chlamydia trachomatis serovar A (strain ATCC VR-571B / DSM 19440 / HAR-13).